The following is a 505-amino-acid chain: ATP synthase subunit alpha (505 aa).

170 to 177 (GDRQTGKT) provides a ligand contact to ATP.

This sequence belongs to the ATPase alpha/beta chains family. F-type ATPases have 2 components, CF(1) - the catalytic core - and CF(0) - the membrane proton channel. CF(1) has five subunits: alpha(3), beta(3), gamma(1), delta(1), epsilon(1). CF(0) has four main subunits: a(1), b(1), b'(1) and c(9-12).

The protein resides in the cellular thylakoid membrane. It carries out the reaction ATP + H2O + 4 H(+)(in) = ADP + phosphate + 5 H(+)(out). Functionally, produces ATP from ADP in the presence of a proton gradient across the membrane. The alpha chain is a regulatory subunit. In Synechococcus sp. (strain RCC307), this protein is ATP synthase subunit alpha.